The chain runs to 59 residues: Large ribosomal subunit protein bL32 (59 aa).

A disordered region spans residues 1 to 59; the sequence is MAVQQNKKSPSKRGMHRSHDFLTNPPLAVEPTSGEIHLRHHVSPNGYYRGRKVLPAKGE. A compositionally biased stretch (basic residues) spans 49-59; that stretch reads RGRKVLPAKGE.

It belongs to the bacterial ribosomal protein bL32 family.

This chain is Large ribosomal subunit protein bL32, found in Methylobacillus flagellatus (strain ATCC 51484 / DSM 6875 / VKM B-1610 / KT).